The sequence spans 279 residues: Replication factor A protein 2 (279 aa).

The tract at residues 26-47 (GAGFNEYDQSSQPSVDRQQGAG) is disordered. Residues 32–46 (YDQSSQPSVDRQQGA) are compositionally biased toward polar residues. The segment at residues 80-140 (VTFVGVLRNI…GNIKIFSGKI (61 aa)) is a DNA-binding region (OB).

This sequence belongs to the replication factor A protein 2 family. In terms of assembly, heterotrimer of 68, 30, and 12 kDa chains. In terms of processing, phosphorylated in a cell cycle-dependent manner. Hypophosphorylated in G1, becomes phosphorylated at the G1/S boundary, it is maintained in this state through the M phase.

The protein localises to the nucleus. Its function is as follows. Binds to single-stranded sequences. This Schizosaccharomyces pombe (strain 972 / ATCC 24843) (Fission yeast) protein is Replication factor A protein 2 (ssb2).